The chain runs to 255 residues: tRNA (guanine-N(1)-)-methyltransferase (255 aa).

Residues Gly-117 and 137 to 142 (LGDFVL) contribute to the S-adenosyl-L-methionine site.

This sequence belongs to the RNA methyltransferase TrmD family. In terms of assembly, homodimer.

It localises to the cytoplasm. The enzyme catalyses guanosine(37) in tRNA + S-adenosyl-L-methionine = N(1)-methylguanosine(37) in tRNA + S-adenosyl-L-homocysteine + H(+). In terms of biological role, specifically methylates guanosine-37 in various tRNAs. In Paracidovorax citrulli (strain AAC00-1) (Acidovorax citrulli), this protein is tRNA (guanine-N(1)-)-methyltransferase.